The chain runs to 263 residues: Small ribosomal subunit protein eS1 (263 aa).

A disordered region spans residues 235-263 (HGEGGGGKGEAGDKSERPEGYEPPVQESV). The span at 244-254 (EAGDKSERPEG) shows a compositional bias: basic and acidic residues.

It belongs to the eukaryotic ribosomal protein eS1 family. In terms of assembly, component of the small ribosomal subunit. Mature ribosomes consist of a small (40S) and a large (60S) subunit. The 40S subunit contains about 33 different proteins and 1 molecule of RNA (18S). The 60S subunit contains about 49 different proteins and 3 molecules of RNA (28S, 5.8S and 5S).

It is found in the cytoplasm. The sequence is that of Small ribosomal subunit protein eS1 from Bombyx mori (Silk moth).